Consider the following 804-residue polypeptide: Type 2 DNA topoisomerase 6 subunit B (804 aa).

ATP-binding positions include asparagine 58, aspartate 89, 110–111 (SR), 120–127 (GQQGIGIS), and lysine 629.

It belongs to the TOP6B family. As to quaternary structure, homodimer. Heterotetramer of two Top6A and two Top6B chains.

It carries out the reaction ATP-dependent breakage, passage and rejoining of double-stranded DNA.. Relaxes both positive and negative superturns and exhibits a strong decatenase activity. The sequence is that of Type 2 DNA topoisomerase 6 subunit B from Halobacterium salinarum (strain ATCC 29341 / DSM 671 / R1).